A 128-amino-acid chain; its full sequence is NHP2-like protein 1 (128 aa).

M1 carries the post-translational modification N-acetylmethionine. The residue at position 2 (T2) is an N-acetylthreonine; in NHP2-like protein 1, N-terminally processed. N6-acetyllysine is present on K21. Positions R36–R48 are interaction with U4 snRNA and U4atac snRNA. The tract at residues S96–V128 is important for U4 snRNA-binding. S122 bears the Phosphoserine mark.

The protein belongs to the eukaryotic ribosomal protein eL8 family. In terms of assembly, identified in the spliceosome B complex. Component of the U4/U6-U5 tri-snRNP complex composed of the U4, U6 and U5 snRNAs and at least PRPF3, PRPF4, PRPF6, PRPF8, PRPF31, SNRNP200, TXNL4A, WDR57, SNRNP40, DDX23, CD2BP2, PPIH, NHP2L1, EFTUD2, SART1 and USP39. Interacts with RAD17 and PRPF31. The complex formed by SNU13 and PRPF31 binds U4 snRNA. The complex formed by SNU13 and PRPF31 also binds U4atac snRNA, a characteristic component of specific, less abundant spliceosomal complexes. Part of the small subunit (SSU) processome, composed of more than 70 proteins and the RNA chaperone small nucleolar RNA (snoRNA) U3. Core component of box C/D small nucleolar ribonucleoprotein (snoRNP) particles; the core proteins SNU13, NOP56, NOP58 and FBL or FBLL1 assemble stepwise onto the snoRNA.

The protein localises to the nucleus. It localises to the nucleolus. Part of the small subunit (SSU) processome, first precursor of the small eukaryotic ribosomal subunit. During the assembly of the SSU processome in the nucleolus, many ribosome biogenesis factors, an RNA chaperone and ribosomal proteins associate with the nascent pre-rRNA and work in concert to generate RNA folding, modifications, rearrangements and cleavage as well as targeted degradation of pre-ribosomal RNA by the RNA exosome. Involved in pre-mRNA splicing as component of the spliceosome. Binds to the 5'-stem-loop of U4 snRNA and thereby contributes to spliceosome assembly. The protein undergoes a conformational change upon RNA-binding. Core component of box C/D small nucleolar ribonucleoprotein (snoRNP) complexes that function in methylation of multiple sites on ribosomal RNAs (rRNAs) and messenger RNAs (mRNAs). The protein is NHP2-like protein 1 of Bos taurus (Bovine).